The primary structure comprises 332 residues: Biotin synthase (332 aa).

A Radical SAM core domain is found at 53–283 (WGKGGVHACS…VHPRKTIKFA (231 aa)). Cys-71, Cys-75, and Cys-78 together coordinate [4Fe-4S] cluster. Residues Cys-150, Cys-211, and Lys-281 each coordinate [2Fe-2S] cluster.

The protein belongs to the radical SAM superfamily. Biotin synthase family. Homodimer. It depends on [4Fe-4S] cluster as a cofactor. [2Fe-2S] cluster is required as a cofactor.

The enzyme catalyses (4R,5S)-dethiobiotin + (sulfur carrier)-SH + 2 reduced [2Fe-2S]-[ferredoxin] + 2 S-adenosyl-L-methionine = (sulfur carrier)-H + biotin + 2 5'-deoxyadenosine + 2 L-methionine + 2 oxidized [2Fe-2S]-[ferredoxin]. It participates in cofactor biosynthesis; biotin biosynthesis; biotin from 7,8-diaminononanoate: step 2/2. In terms of biological role, catalyzes the conversion of dethiobiotin (DTB) to biotin by the insertion of a sulfur atom into dethiobiotin via a radical-based mechanism. In Chlorobium luteolum (strain DSM 273 / BCRC 81028 / 2530) (Pelodictyon luteolum), this protein is Biotin synthase.